Reading from the N-terminus, the 219-residue chain is Orotate phosphoribosyltransferase (219 aa).

Position 26 (lysine 26) interacts with 5-phospho-alpha-D-ribose 1-diphosphate. Orotate is bound at residue 34–35 (FF). Residues 72-73 (YK), arginine 98, lysine 99, lysine 102, histidine 104, and 124-132 (DDVITAGTA) contribute to the 5-phospho-alpha-D-ribose 1-diphosphate site. Orotate-binding residues include threonine 128 and arginine 156.

It belongs to the purine/pyrimidine phosphoribosyltransferase family. PyrE subfamily. As to quaternary structure, homodimer. Requires Mg(2+) as cofactor.

The catalysed reaction is orotidine 5'-phosphate + diphosphate = orotate + 5-phospho-alpha-D-ribose 1-diphosphate. It functions in the pathway pyrimidine metabolism; UMP biosynthesis via de novo pathway; UMP from orotate: step 1/2. Catalyzes the transfer of a ribosyl phosphate group from 5-phosphoribose 1-diphosphate to orotate, leading to the formation of orotidine monophosphate (OMP). In Xanthomonas axonopodis pv. citri (strain 306), this protein is Orotate phosphoribosyltransferase.